Reading from the N-terminus, the 334-residue chain is Holliday junction branch migration complex subunit RuvB (334 aa).

Positions 4-184 are large ATPase domain (RuvB-L); that stretch reads ADRLIAADAQ…FGIVQRLEFY (181 aa). ATP is bound by residues Ile23, Arg24, Gly65, Lys68, Thr69, Thr70, 131–133, Arg174, Tyr184, and Arg221; that span reads EDY. A Mg(2+)-binding site is contributed by Thr69. Residues 185–255 form a small ATPAse domain (RuvB-S) region; sequence QVADLQHIVG…VAAQALNMLD (71 aa). The head domain (RuvB-H) stretch occupies residues 258–334; the sequence is AAGFDYMDRK…YQHFGIDRAE (77 aa). Residues Arg294, Arg313, and Arg318 each contribute to the DNA site.

The protein belongs to the RuvB family. Homohexamer. Forms an RuvA(8)-RuvB(12)-Holliday junction (HJ) complex. HJ DNA is sandwiched between 2 RuvA tetramers; dsDNA enters through RuvA and exits via RuvB. An RuvB hexamer assembles on each DNA strand where it exits the tetramer. Each RuvB hexamer is contacted by two RuvA subunits (via domain III) on 2 adjacent RuvB subunits; this complex drives branch migration. In the full resolvosome a probable DNA-RuvA(4)-RuvB(12)-RuvC(2) complex forms which resolves the HJ.

The protein resides in the cytoplasm. It catalyses the reaction ATP + H2O = ADP + phosphate + H(+). Its function is as follows. The RuvA-RuvB-RuvC complex processes Holliday junction (HJ) DNA during genetic recombination and DNA repair, while the RuvA-RuvB complex plays an important role in the rescue of blocked DNA replication forks via replication fork reversal (RFR). RuvA specifically binds to HJ cruciform DNA, conferring on it an open structure. The RuvB hexamer acts as an ATP-dependent pump, pulling dsDNA into and through the RuvAB complex. RuvB forms 2 homohexamers on either side of HJ DNA bound by 1 or 2 RuvA tetramers; 4 subunits per hexamer contact DNA at a time. Coordinated motions by a converter formed by DNA-disengaged RuvB subunits stimulates ATP hydrolysis and nucleotide exchange. Immobilization of the converter enables RuvB to convert the ATP-contained energy into a lever motion, pulling 2 nucleotides of DNA out of the RuvA tetramer per ATP hydrolyzed, thus driving DNA branch migration. The RuvB motors rotate together with the DNA substrate, which together with the progressing nucleotide cycle form the mechanistic basis for DNA recombination by continuous HJ branch migration. Branch migration allows RuvC to scan DNA until it finds its consensus sequence, where it cleaves and resolves cruciform DNA. The polypeptide is Holliday junction branch migration complex subunit RuvB (Edwardsiella ictaluri (strain 93-146)).